The primary structure comprises 387 residues: ATP phosphoribosyltransferase regulatory subunit (387 aa).

This sequence belongs to the class-II aminoacyl-tRNA synthetase family. HisZ subfamily. As to quaternary structure, heteromultimer composed of HisG and HisZ subunits.

It is found in the cytoplasm. It participates in amino-acid biosynthesis; L-histidine biosynthesis; L-histidine from 5-phospho-alpha-D-ribose 1-diphosphate: step 1/9. Functionally, required for the first step of histidine biosynthesis. May allow the feedback regulation of ATP phosphoribosyltransferase activity by histidine. This chain is ATP phosphoribosyltransferase regulatory subunit, found in Psychrobacter arcticus (strain DSM 17307 / VKM B-2377 / 273-4).